A 363-amino-acid polypeptide reads, in one-letter code: Nucleoporin SEH1 (363 aa).

WD repeat units follow at residues 15–54 (AHRDLIHCVSFDPHGRRMATCASDMTMAIWDRKPDGNWRR), 60–101 (CHGG…SEKD), 108–149 (QWIR…RIYE), 158–206 (RWNL…VIYE), 223–264 (DLPC…SAIL), and 287–326 (GDHRKAWRLRYNLMGSVISSTSLDGTLRSWKSLFVNQWVK).

Belongs to the WD repeat SEC13 family. As to quaternary structure, component of the nuclear pore complex (NPC). Probably part of the GATOR complex.

It is found in the nucleus. Its subcellular location is the nuclear pore complex. The protein resides in the lysosome membrane. It localises to the nucleus envelope. Probable component of the nuclear pore complex (NPC) which is involved in the trafficking of macromolecules between the cytoplasm and nucleus. Its function is as follows. As a component of the GATOR complex may function in the amino acid-sensing branch of the TORC1 signaling pathway. This chain is Nucleoporin SEH1, found in Caenorhabditis elegans.